We begin with the raw amino-acid sequence, 254 residues long: Ribonuclease HII (254 aa).

An RNase H type-2 domain is found at 70 to 254; that stretch reads RYICGIDEVG…ASFIKNLTSC (185 aa). The a divalent metal cation site is built by Asp76, Glu77, and Asp168.

It belongs to the RNase HII family. Mn(2+) serves as cofactor. Requires Mg(2+) as cofactor.

It is found in the cytoplasm. The catalysed reaction is Endonucleolytic cleavage to 5'-phosphomonoester.. Functionally, endonuclease that specifically degrades the RNA of RNA-DNA hybrids. This Lachnoclostridium phytofermentans (strain ATCC 700394 / DSM 18823 / ISDg) (Clostridium phytofermentans) protein is Ribonuclease HII.